Here is a 314-residue protein sequence, read N- to C-terminus: Nodulation protein D 1 (314 aa).

Positions 6-63 (LDLNLLVVLDALLTERTLTAAASSINLSQPAMSAAVARLRDYFNDELFTTSGRERVLT) constitute an HTH lysR-type domain. Residues 23–42 (LTAAASSINLSQPAMSAAVA) constitute a DNA-binding region (H-T-H motif).

Belongs to the LysR transcriptional regulatory family.

In terms of biological role, nodD regulates the expression of the nodABCFE genes which encode other nodulation proteins. NodD is also a negative regulator of its own expression. Binds flavenoids as inducers. The polypeptide is Nodulation protein D 1 (nodD1) (Mesorhizobium japonicum (strain LMG 29417 / CECT 9101 / MAFF 303099) (Mesorhizobium loti (strain MAFF 303099))).